A 101-amino-acid chain; its full sequence is uncharacterized protein (101 aa).

Positions 1 to 18 (MSINALLYVLSLALLIWT) are cleaved as a signal peptide. The chain crosses the membrane as a helical span at residues 62-82 (FQFDSIPSSSLSLSPFPFLFF).

Its subcellular location is the membrane. This is an uncharacterized protein from Saccharomyces cerevisiae (strain ATCC 204508 / S288c) (Baker's yeast).